Reading from the N-terminus, the 888-residue chain is Pyruvate dehydrogenase E1 component (888 aa).

In terms of assembly, homodimer. Part of the PDH complex, consisting of multiple copies of pyruvate dehydrogenase (E1), dihydrolipoamide acetyltransferase (E2) and lipoamide dehydrogenase (E3). The cofactor is thiamine diphosphate.

The enzyme catalyses N(6)-[(R)-lipoyl]-L-lysyl-[protein] + pyruvate + H(+) = N(6)-[(R)-S(8)-acetyldihydrolipoyl]-L-lysyl-[protein] + CO2. Its function is as follows. Component of the pyruvate dehydrogenase (PDH) complex, that catalyzes the overall conversion of pyruvate to acetyl-CoA and CO(2). The protein is Pyruvate dehydrogenase E1 component (aceE) of Buchnera aphidicola subsp. Schizaphis graminum (strain Sg).